The sequence spans 133 residues: Bacteriohemerythrin (133 aa).

Residues His-19, His-56, Glu-60, His-75, His-79, His-115, and Asp-120 each coordinate Fe cation.

It belongs to the hemerythrin family. In terms of assembly, monomer.

Oxygen-binding protein. May be involved in a storage mechanism or for delivery to oxygen-requiring enzymes. The oxygen-binding site contains two iron atoms. This chain is Bacteriohemerythrin, found in Campylobacter jejuni subsp. jejuni serotype O:23/36 (strain 81-176).